The following is a 514-amino-acid chain: Putative fucosyltransferase 10 (514 aa).

N-linked (GlcNAc...) asparagine glycans are attached at residues asparagine 185, asparagine 210, asparagine 355, asparagine 377, and asparagine 456.

It belongs to the glycosyltransferase 37 family. Expressed in root, leaves, stems and seedlings.

The protein resides in the golgi apparatus. The protein operates within protein modification; protein glycosylation. May be involved in cell wall biosynthesis. May act as a fucosyltransferase. The polypeptide is Putative fucosyltransferase 10 (FUT10) (Arabidopsis thaliana (Mouse-ear cress)).